Consider the following 306-residue polypeptide: Mediator of RNA polymerase II transcription subunit 30 (306 aa).

2 disordered regions span residues 1 to 22 (MSGQ…FNSP) and 51 to 148 (QQQM…STQA). Low complexity predominate over residues 51 to 128 (QQQMQSGGVQ…VSSAAQSATG (78 aa)).

It belongs to the Mediator complex subunit 30 family. Component of the Mediator complex.

Its subcellular location is the nucleus. Component of the Mediator complex, a coactivator involved in the regulated transcription of nearly all RNA polymerase II-dependent genes. Mediator functions as a bridge to convey information from gene-specific regulatory proteins to the basal RNA polymerase II transcription machinery. Mediator is recruited to promoters by direct interactions with regulatory proteins and serves as a scaffold for the assembly of a functional preinitiation complex with RNA polymerase II and the general transcription factors. In Aedes aegypti (Yellowfever mosquito), this protein is Mediator of RNA polymerase II transcription subunit 30 (MED30).